The sequence spans 223 residues: MIF4G domain-containing protein B (223 aa).

Residues 9-206 (DYKIQGFDAD…LEMIEYRAAG (198 aa)) enclose the MIF4G domain.

The protein belongs to the MIF4GD family. Interacts with eif4g1, eif4g2 and slbp; probably tethered by SLBP to the 3'-end of mRNAs ending with the histone stem-loop, it also interacts with eif4g1 which is bound to their 5'-end.

The protein resides in the cytoplasm. It localises to the nucleus. Functionally, functions in replication-dependent translation of histone mRNAs which differ from other eukaryotic mRNAs in that they do not end with a poly-A tail but a stem-loop. May participate in circularizing those mRNAs specifically enhancing their translation. The protein is MIF4G domain-containing protein B (mif4gd-b) of Xenopus laevis (African clawed frog).